Here is a 214-residue protein sequence, read N- to C-terminus: GTP cyclohydrolase 1 (214 aa).

Residues cysteine 108, histidine 111, and cysteine 179 each coordinate Zn(2+).

This sequence belongs to the GTP cyclohydrolase I family. In terms of assembly, toroid-shaped homodecamer, composed of two pentamers of five dimers.

The enzyme catalyses GTP + H2O = 7,8-dihydroneopterin 3'-triphosphate + formate + H(+). It functions in the pathway cofactor biosynthesis; 7,8-dihydroneopterin triphosphate biosynthesis; 7,8-dihydroneopterin triphosphate from GTP: step 1/1. The polypeptide is GTP cyclohydrolase 1 (Shewanella putrefaciens (strain CN-32 / ATCC BAA-453)).